Here is a 357-residue protein sequence, read N- to C-terminus: Thiamine thiazole synthase 3, chloroplastic (357 aa).

The transit peptide at 1-51 directs the protein to the chloroplast; it reads MSISAAGVATGLGANVELKSNVGSSSSSVAGVRLFTSRKAQLRRCAAPATS. Substrate contacts are provided by residues Ala103, 123-124, Gly131, and Ala196; that span reads EQ. A 2,3-didehydroalanine (Cys) modification is found at Cys225. Residues Asp227, His242, Met294, and 304 to 306 contribute to the substrate site; that span reads RMG.

It belongs to the THI4 family. As to quaternary structure, homooctamer. Fe cation serves as cofactor. Post-translationally, during the catalytic reaction, a sulfide is transferred from Cys-225 to a reaction intermediate, generating a dehydroalanine residue.

It is found in the plastid. The protein localises to the chloroplast. The enzyme catalyses [ADP-thiazole synthase]-L-cysteine + glycine + NAD(+) = [ADP-thiazole synthase]-dehydroalanine + ADP-5-ethyl-4-methylthiazole-2-carboxylate + nicotinamide + 3 H2O + 2 H(+). In terms of biological role, involved in biosynthesis of the thiamine precursor thiazole. Catalyzes the conversion of NAD and glycine to adenosine diphosphate 5-(2-hydroxyethyl)-4-methylthiazole-2-carboxylic acid (ADT), an adenylated thiazole intermediate. The reaction includes an iron-dependent sulfide transfer from a conserved cysteine residue of the protein to a thiazole intermediate. The enzyme can only undergo a single turnover, which suggests it is a suicide enzyme. May have additional roles in adaptation to various stress conditions and in DNA damage tolerance. The sequence is that of Thiamine thiazole synthase 3, chloroplastic from Physcomitrium patens (Spreading-leaved earth moss).